A 448-amino-acid chain; its full sequence is Probable 3-ketoacyl-CoA thiolase (448 aa).

The active-site Acyl-thioester intermediate is the Cys-110. Catalysis depends on proton acceptor residues His-402 and Cys-432.

The protein belongs to the thiolase-like superfamily. Thiolase family.

The protein resides in the mitochondrion. It catalyses the reaction an acyl-CoA + acetyl-CoA = a 3-oxoacyl-CoA + CoA. It functions in the pathway lipid metabolism; fatty acid beta-oxidation. Mitochondrial enzyme that catalyzes reactions of the mitochondrial beta-oxidation pathway. This is Probable 3-ketoacyl-CoA thiolase from Caenorhabditis elegans.